The sequence spans 390 residues: Dual-specificity RNA methyltransferase RlmN (390 aa).

E110 functions as the Proton acceptor in the catalytic mechanism. Positions 116-355 (EADRATLCVS…VIIRKTRGDD (240 aa)) constitute a Radical SAM core domain. Cysteines 123 and 360 form a disulfide. The [4Fe-4S] cluster site is built by C130, C134, and C137. S-adenosyl-L-methionine is bound by residues 184 to 185 (GE), S216, 238 to 240 (SLH), and N317. C360 (S-methylcysteine intermediate) is an active-site residue.

Belongs to the radical SAM superfamily. RlmN family. Requires [4Fe-4S] cluster as cofactor.

It localises to the cytoplasm. The catalysed reaction is adenosine(2503) in 23S rRNA + 2 reduced [2Fe-2S]-[ferredoxin] + 2 S-adenosyl-L-methionine = 2-methyladenosine(2503) in 23S rRNA + 5'-deoxyadenosine + L-methionine + 2 oxidized [2Fe-2S]-[ferredoxin] + S-adenosyl-L-homocysteine. It catalyses the reaction adenosine(37) in tRNA + 2 reduced [2Fe-2S]-[ferredoxin] + 2 S-adenosyl-L-methionine = 2-methyladenosine(37) in tRNA + 5'-deoxyadenosine + L-methionine + 2 oxidized [2Fe-2S]-[ferredoxin] + S-adenosyl-L-homocysteine. Specifically methylates position 2 of adenine 2503 in 23S rRNA and position 2 of adenine 37 in tRNAs. m2A2503 modification seems to play a crucial role in the proofreading step occurring at the peptidyl transferase center and thus would serve to optimize ribosomal fidelity. The protein is Dual-specificity RNA methyltransferase RlmN of Haemophilus influenzae (strain PittEE).